The primary structure comprises 243 residues: Triosephosphate isomerase (243 aa).

Position 9-11 (9-11 (NWK)) interacts with substrate. The active-site Electrophile is the H96. Residue E165 is the Proton acceptor of the active site. Substrate contacts are provided by residues G171, S204, and 225–226 (GG).

It belongs to the triosephosphate isomerase family. In terms of assembly, homodimer.

It localises to the cytoplasm. The enzyme catalyses D-glyceraldehyde 3-phosphate = dihydroxyacetone phosphate. The protein operates within carbohydrate biosynthesis; gluconeogenesis. It functions in the pathway carbohydrate degradation; glycolysis; D-glyceraldehyde 3-phosphate from glycerone phosphate: step 1/1. Involved in the gluconeogenesis. Catalyzes stereospecifically the conversion of dihydroxyacetone phosphate (DHAP) to D-glyceraldehyde-3-phosphate (G3P). The polypeptide is Triosephosphate isomerase (Prochlorococcus marinus (strain MIT 9313)).